Consider the following 337-residue polypeptide: UDP-3-O-acylglucosamine N-acyltransferase (337 aa).

The active-site Proton acceptor is His-238.

Belongs to the transferase hexapeptide repeat family. LpxD subfamily. In terms of assembly, homotrimer.

The catalysed reaction is a UDP-3-O-[(3R)-3-hydroxyacyl]-alpha-D-glucosamine + a (3R)-hydroxyacyl-[ACP] = a UDP-2-N,3-O-bis[(3R)-3-hydroxyacyl]-alpha-D-glucosamine + holo-[ACP] + H(+). The protein operates within bacterial outer membrane biogenesis; LPS lipid A biosynthesis. Functionally, catalyzes the N-acylation of UDP-3-O-acylglucosamine using 3-hydroxyacyl-ACP as the acyl donor. Is involved in the biosynthesis of lipid A, a phosphorylated glycolipid that anchors the lipopolysaccharide to the outer membrane of the cell. This Xanthomonas euvesicatoria pv. vesicatoria (strain 85-10) (Xanthomonas campestris pv. vesicatoria) protein is UDP-3-O-acylglucosamine N-acyltransferase.